A 296-amino-acid chain; its full sequence is Light-independent protochlorophyllide reductase iron-sulfur ATP-binding protein (296 aa).

ATP-binding positions include 39–44 (GIGKST) and Lys68. Residue Ser43 coordinates Mg(2+). [4Fe-4S] cluster contacts are provided by Cys124 and Cys158. Position 209-210 (209-210 (NR)) interacts with ATP.

Belongs to the NifH/BchL/ChlL family. Homodimer. Protochlorophyllide reductase is composed of three subunits; ChlL, ChlN and ChlB. The cofactor is [4Fe-4S] cluster.

The enzyme catalyses chlorophyllide a + oxidized 2[4Fe-4S]-[ferredoxin] + 2 ADP + 2 phosphate = protochlorophyllide a + reduced 2[4Fe-4S]-[ferredoxin] + 2 ATP + 2 H2O. It participates in porphyrin-containing compound metabolism; chlorophyll biosynthesis (light-independent). In terms of biological role, component of the dark-operative protochlorophyllide reductase (DPOR) that uses Mg-ATP and reduced ferredoxin to reduce ring D of protochlorophyllide (Pchlide) to form chlorophyllide a (Chlide). This reaction is light-independent. The L component serves as a unique electron donor to the NB-component of the complex, and binds Mg-ATP. The sequence is that of Light-independent protochlorophyllide reductase iron-sulfur ATP-binding protein from Synechococcus sp. (strain WH7803).